The sequence spans 98 residues: NADH-ubiquinone oxidoreductase chain 4L (98 aa).

Helical transmembrane passes span 1-21, 29-49, and 61-81; these read MPYIYMNITLAFVISLIGTLM, SLLCLEGMLLSLFTLNALLSL, and LILLVFAACEAAVGLALLVMI.

Belongs to the complex I subunit 4L family. In terms of assembly, core subunit of respiratory chain NADH dehydrogenase (Complex I) which is composed of 45 different subunits.

It localises to the mitochondrion inner membrane. It catalyses the reaction a ubiquinone + NADH + 5 H(+)(in) = a ubiquinol + NAD(+) + 4 H(+)(out). In terms of biological role, core subunit of the mitochondrial membrane respiratory chain NADH dehydrogenase (Complex I) which catalyzes electron transfer from NADH through the respiratory chain, using ubiquinone as an electron acceptor. Part of the enzyme membrane arm which is embedded in the lipid bilayer and involved in proton translocation. The chain is NADH-ubiquinone oxidoreductase chain 4L (MT-ND4L) from Elephas maximus (Indian elephant).